Consider the following 233-residue polypeptide: N-(5'-phosphoribosyl)anthranilate isomerase (233 aa).

The protein belongs to the TrpF family.

It carries out the reaction N-(5-phospho-beta-D-ribosyl)anthranilate = 1-(2-carboxyphenylamino)-1-deoxy-D-ribulose 5-phosphate. It participates in amino-acid biosynthesis; L-tryptophan biosynthesis; L-tryptophan from chorismate: step 3/5. In Synechococcus sp. (strain JA-2-3B'a(2-13)) (Cyanobacteria bacterium Yellowstone B-Prime), this protein is N-(5'-phosphoribosyl)anthranilate isomerase.